The primary structure comprises 288 residues: MWCPSVSLSIWANAWLAGKAAPDDVLDALSLWAPTQSVAAYDAVAAGHTGLPWPDVHDAGTVSLLQTLRAAVGRRRLRGTINVVLPVPGDVRGLAAGTQFEHDALAAGEAVIVANPEDPGSAVGLVPEFSYGDVDEAAQSEPLTPELCALSWMVYSLPGAPVLEHYELGDAEYALRSAVRSAAEALSTIGLGSSDVANPRGLVEQLLESSRQHRVPDHAPSRALRVLENAAHVDAIIAVSAGLSRLPIGTQSLSDAQRATDALRPLTAVVRSARMSAVTAILHSAWPD.

The protein to M.bovis Mb1522c, M.leprae ML1804 and M.avium MAV321.

This is an uncharacterized protein from Mycobacterium tuberculosis (strain CDC 1551 / Oshkosh).